The primary structure comprises 101 residues: Small ribosomal subunit protein uS14A (101 aa).

A disordered region spans residues 31-74; sequence IRKPSTPEADRAAAQAALQRLPRDASPVRLRNRDAADGRPRGHL. Residues 61–70 show a composition bias toward basic and acidic residues; it reads RNRDAADGRP.

It belongs to the universal ribosomal protein uS14 family. In terms of assembly, part of the 30S ribosomal subunit. Contacts proteins S3 and S10.

Binds 16S rRNA, required for the assembly of 30S particles and may also be responsible for determining the conformation of the 16S rRNA at the A site. The sequence is that of Small ribosomal subunit protein uS14A from Nocardia farcinica (strain IFM 10152).